A 233-amino-acid chain; its full sequence is Phosphatidylserine decarboxylase proenzyme (233 aa).

The active-site Schiff-base intermediate with substrate; via pyruvic acid is serine 190. The residue at position 190 (serine 190) is a Pyruvic acid (Ser); by autocatalysis.

It belongs to the phosphatidylserine decarboxylase family. PSD-A subfamily. As to quaternary structure, heterodimer of a large membrane-associated beta subunit and a small pyruvoyl-containing alpha subunit. The cofactor is pyruvate. Is synthesized initially as an inactive proenzyme. Formation of the active enzyme involves a self-maturation process in which the active site pyruvoyl group is generated from an internal serine residue via an autocatalytic post-translational modification. Two non-identical subunits are generated from the proenzyme in this reaction, and the pyruvate is formed at the N-terminus of the alpha chain, which is derived from the carboxyl end of the proenzyme. The post-translation cleavage follows an unusual pathway, termed non-hydrolytic serinolysis, in which the side chain hydroxyl group of the serine supplies its oxygen atom to form the C-terminus of the beta chain, while the remainder of the serine residue undergoes an oxidative deamination to produce ammonia and the pyruvoyl prosthetic group on the alpha chain.

The protein localises to the cell membrane. It carries out the reaction a 1,2-diacyl-sn-glycero-3-phospho-L-serine + H(+) = a 1,2-diacyl-sn-glycero-3-phosphoethanolamine + CO2. It participates in phospholipid metabolism; phosphatidylethanolamine biosynthesis; phosphatidylethanolamine from CDP-diacylglycerol: step 2/2. In terms of biological role, catalyzes the formation of phosphatidylethanolamine (PtdEtn) from phosphatidylserine (PtdSer). This Bartonella quintana (strain Toulouse) (Rochalimaea quintana) protein is Phosphatidylserine decarboxylase proenzyme.